The following is a 479-amino-acid chain: Aspartyl/glutamyl-tRNA(Asn/Gln) amidotransferase subunit B (479 aa).

It belongs to the GatB/GatE family. GatB subfamily. In terms of assembly, heterotrimer of A, B and C subunits.

The catalysed reaction is L-glutamyl-tRNA(Gln) + L-glutamine + ATP + H2O = L-glutaminyl-tRNA(Gln) + L-glutamate + ADP + phosphate + H(+). It carries out the reaction L-aspartyl-tRNA(Asn) + L-glutamine + ATP + H2O = L-asparaginyl-tRNA(Asn) + L-glutamate + ADP + phosphate + 2 H(+). Allows the formation of correctly charged Asn-tRNA(Asn) or Gln-tRNA(Gln) through the transamidation of misacylated Asp-tRNA(Asn) or Glu-tRNA(Gln) in organisms which lack either or both of asparaginyl-tRNA or glutaminyl-tRNA synthetases. The reaction takes place in the presence of glutamine and ATP through an activated phospho-Asp-tRNA(Asn) or phospho-Glu-tRNA(Gln). This Streptococcus pyogenes serotype M1 protein is Aspartyl/glutamyl-tRNA(Asn/Gln) amidotransferase subunit B.